Consider the following 1040-residue polypeptide: Multidrug resistance protein MdtB (1040 aa).

12 consecutive transmembrane segments (helical) span residues 25 to 45 (LLMAAILLAGIIGYRFLPVAA), 347 to 367 (LMLAIALVVMIIYLFLRNIPA), 369 to 389 (IIPGVAVPLSLIGTFAVMVFL), 396 to 416 (LTLMALTIATGFVVDDAIVVI), 440 to 460 (IGFTIISLTFSLIAVLIPLLF), 472 to 492 (FAVTLAVAILISAVVSLTLTP), 537 to 557 (WLTLSVAFATLLLSVMLWIVI), 863 to 883 (LGSTVWLIVAAVVAMYIVLGV), 888 to 908 (FIHPITILSTLPTAGVGALLA), 910 to 930 (IIAGSELDIIAIIGIILLIGI), 968 to 988 (ILMTTLAALLGALPLMLSTGV), and 998 to 1018 (IAMVGGLLVSQVLTLFTTPVI).

It belongs to the resistance-nodulation-cell division (RND) (TC 2.A.6) family. MdtB subfamily. Part of a tripartite efflux system composed of MdtA, MdtB and MdtC. MdtB forms a heteromultimer with MdtC.

It is found in the cell inner membrane. This Salmonella dublin (strain CT_02021853) protein is Multidrug resistance protein MdtB.